The following is a 140-amino-acid chain: Relaxin-3 (140 aa).

The signal sequence occupies residues 1-23; that stretch reads MATRGLLLASWALLGALVLQAEA. Disulfide bonds link Cys33–Cys127, Cys45–Cys140, and Cys126–Cys131. A propeptide spans 53–116 (connecting peptide); sequence ADILAHDPLG…GSPGVVRGSR (64 aa).

This sequence belongs to the insulin family. In terms of assembly, heterodimer of a B chain and an A chain linked by two disulfide bonds. In terms of tissue distribution, highly abundant expression is detected in neurons within the ventomedial dorsal tegmental nucleus and the laterally central gray alpha of the pons. Also detected at much lower levels within the hippocampus.

The protein resides in the secreted. May play a role in neuropeptide signaling processes. Ligand for LGR7, relaxin-3 receptor-1 and relaxin-3 receptor-2. In Rattus norvegicus (Rat), this protein is Relaxin-3 (Rln3).